The chain runs to 546 residues: Putative serine hydroxymethyltransferase, mitochondrial (546 aa).

The N-terminal 64 residues, 1–64 (MSSFQSTAAV…RFSSSSIAND (64 aa)), are a transit peptide targeting the mitochondrion. K305 bears the N6-(pyridoxal phosphate)lysine mark.

It belongs to the SHMT family. In terms of assembly, homotetramer. The cofactor is pyridoxal 5'-phosphate.

It is found in the mitochondrion. The enzyme catalyses (6R)-5,10-methylene-5,6,7,8-tetrahydrofolate + glycine + H2O = (6S)-5,6,7,8-tetrahydrofolate + L-serine. The protein operates within one-carbon metabolism; tetrahydrofolate interconversion. Its function is as follows. Interconversion of serine and glycine. This chain is Putative serine hydroxymethyltransferase, mitochondrial (cbs-2), found in Neurospora crassa (strain ATCC 24698 / 74-OR23-1A / CBS 708.71 / DSM 1257 / FGSC 987).